A 338-amino-acid polypeptide reads, in one-letter code: Fructose-1,6-bisphosphatase class 1 (338 aa).

The Mg(2+) site is built by glutamate 91, aspartate 113, leucine 115, and aspartate 116. Substrate is bound by residues 116-119, asparagine 211, tyrosine 244, and lysine 277; that span reads DGSS. Glutamate 283 serves as a coordination point for Mg(2+).

This sequence belongs to the FBPase class 1 family. As to quaternary structure, homotetramer. Requires Mg(2+) as cofactor.

The protein resides in the cytoplasm. The enzyme catalyses beta-D-fructose 1,6-bisphosphate + H2O = beta-D-fructose 6-phosphate + phosphate. Its pathway is carbohydrate biosynthesis; gluconeogenesis. This chain is Fructose-1,6-bisphosphatase class 1, found in Oleidesulfovibrio alaskensis (strain ATCC BAA-1058 / DSM 17464 / G20) (Desulfovibrio alaskensis).